Reading from the N-terminus, the 299-residue chain is Tyrosine recombinase XerC (299 aa).

In terms of domain architecture, Core-binding (CB) spans 1–85 (MEQHLDAYCM…AVRGFYKYLN (85 aa)). Positions 106–285 (RLPKTLDTDR…DFQHLATVYD (180 aa)) constitute a Tyr recombinase domain. Active-site residues include arginine 146, lysine 170, histidine 237, arginine 240, and histidine 263. Tyrosine 272 serves as the catalytic O-(3'-phospho-DNA)-tyrosine intermediate.

Belongs to the 'phage' integrase family. XerC subfamily. As to quaternary structure, forms a cyclic heterotetrameric complex composed of two molecules of XerC and two molecules of XerD.

It is found in the cytoplasm. Functionally, site-specific tyrosine recombinase, which acts by catalyzing the cutting and rejoining of the recombining DNA molecules. The XerC-XerD complex is essential to convert dimers of the bacterial chromosome into monomers to permit their segregation at cell division. It also contributes to the segregational stability of plasmids. The polypeptide is Tyrosine recombinase XerC (Pseudomonas savastanoi pv. phaseolicola (strain 1448A / Race 6) (Pseudomonas syringae pv. phaseolicola (strain 1448A / Race 6))).